Consider the following 36-residue polypeptide: Lambda-hexatoxin-Hv1b (36 aa).

Intrachain disulfides connect Cys3-Cys17, Cys10-Cys22, Cys13-Cys14, and Cys16-Cys33.

The protein belongs to the neurotoxin 11 (kappa toxin) family. In terms of tissue distribution, expressed by the venom gland.

Its subcellular location is the secreted. This excitatory toxin inhibits insect calcium-activated potassium (KCa) channels (Slo-type). In Hadronyche versuta (Blue mountains funnel-web spider), this protein is Lambda-hexatoxin-Hv1b.